Reading from the N-terminus, the 411-residue chain is Ornithine aminotransferase (411 aa).

Lys-257 bears the N6-(pyridoxal phosphate)lysine mark.

Belongs to the class-III pyridoxal-phosphate-dependent aminotransferase family. OAT subfamily. Requires pyridoxal 5'-phosphate as cofactor.

The protein localises to the cytoplasm. The enzyme catalyses a 2-oxocarboxylate + L-ornithine = L-glutamate 5-semialdehyde + an L-alpha-amino acid. It participates in amino-acid biosynthesis; L-proline biosynthesis; L-glutamate 5-semialdehyde from L-ornithine: step 1/1. Catalyzes the interconversion of ornithine to glutamate semialdehyde. The polypeptide is Ornithine aminotransferase (Bordetella bronchiseptica (strain ATCC BAA-588 / NCTC 13252 / RB50) (Alcaligenes bronchisepticus)).